Reading from the N-terminus, the 164-residue chain is Large ribosomal subunit protein eL24 (164 aa).

2 disordered regions span residues 63–82 and 117–164; these read KDAA…KPYS and ERIK…GGKA. Residues 71-81 show a composition bias toward basic residues; that stretch reads KKRRRATKKPY. Positions 117-133 are enriched in basic and acidic residues; the sequence is ERIKKTKDEKKAKKAEV.

Belongs to the eukaryotic ribosomal protein eL24 family.

The protein localises to the cytoplasm. In Cicer arietinum (Chickpea), this protein is Large ribosomal subunit protein eL24 (RPL24).